A 592-amino-acid chain; its full sequence is Laccase PFICI_06862 (592 aa).

An N-terminal signal peptide occupies residues 1–19 (MYIQTQFASLLLLAGTSLA). An N-linked (GlcNAc...) asparagine glycan is attached at Asn-26. Plastocyanin-like domains are found at residues 32–142 (QWSS…WIAP) and 173–350 (VVIS…RYPG). Cu cation-binding residues include His-78, His-80, His-123, and His-125. N-linked (GlcNAc...) asparagine glycans are attached at residues Asn-370, Asn-407, and Asn-454. In terms of domain architecture, Plastocyanin-like 3 spans 445 to 563 (SDVQGGSMQN…AGQQVVLLEG (119 aa)). Residue His-475 coordinates Cu cation. Residue Asn-524 is glycosylated (N-linked (GlcNAc...) asparagine).

This sequence belongs to the multicopper oxidase family.

It localises to the cell surface. It participates in pigment biosynthesis; melanin biosynthesis. Functionally, laccase involved the biosynthesis of dihydroxynaphthalene (DHN)-melanin, a bluish-green pigment forming a dark layer in the conidial wall that protects the conidia from UV radiations. The first step of the pathway is the production of the pentaketide 1,3,6,8-tetrahydroxynaphthalene (1,3,6,8-THN or T4HN) by the polyketide synthase PfmaE though condensation of acetyl-CoA with malonyl-CoA. T4HN is not stable and easily oxidizes into the stable form flaviolin. T4HN is also substrate of the hydroxynaphthalene reductase PfmaG to yield scytalone. The scytalone dehydratase PfmaJ then reduces scytalone to 1,3,8-THN. 1,3,8-THN is then substrate of the hydroxynaphthalene reductase PfmaI to yield vermelone. Vermelone is further converted by the multicopper oxidase PfmaD to 1,8-DHN. Finally the laccase PFICI_06862 transforms 1,8-DHN to DHN-melanin. The roles of the 5-oxoprolinase PfmaA and the proline iminopeptidase PfmaB within the cluster have not been elucidated yet. This Pestalotiopsis fici (strain W106-1 / CGMCC3.15140) protein is Laccase PFICI_06862.